Consider the following 294-residue polypeptide: Ribosomal protein L11 methyltransferase (294 aa).

Residues Thr147, Gly169, Asp191, and Asn231 each contribute to the S-adenosyl-L-methionine site.

This sequence belongs to the methyltransferase superfamily. PrmA family.

Its subcellular location is the cytoplasm. The enzyme catalyses L-lysyl-[protein] + 3 S-adenosyl-L-methionine = N(6),N(6),N(6)-trimethyl-L-lysyl-[protein] + 3 S-adenosyl-L-homocysteine + 3 H(+). In terms of biological role, methylates ribosomal protein L11. This chain is Ribosomal protein L11 methyltransferase, found in Dichelobacter nodosus (strain VCS1703A).